A 225-amino-acid polypeptide reads, in one-letter code: UPF0758 protein XOO0495 (225 aa).

The MPN domain maps to 102-224 (ALSDPPSVGR…PVSLAERGWL (123 aa)). Zn(2+) is bound by residues histidine 173, histidine 175, and aspartate 186. The JAMM motif signature appears at 173-186 (HNHPSGNPEPSKAD).

This sequence belongs to the UPF0758 family.

The chain is UPF0758 protein XOO0495 from Xanthomonas oryzae pv. oryzae (strain KACC10331 / KXO85).